Here is a 148-residue protein sequence, read N- to C-terminus: Small ribosomal subunit protein eS19G (148 aa).

Belongs to the eukaryotic ribosomal protein eS19 family.

Its function is as follows. Elimination of the ALEP-1 gene from all somatic cells in its fully activate state may represent an alternative way to gene regulation. The polypeptide is Small ribosomal subunit protein eS19G (RPS19G) (Ascaris suum (Pig roundworm)).